A 362-amino-acid polypeptide reads, in one-letter code: PDZ and LIM domain protein 3 (362 aa).

Residues 1–84 (MPQNVVLPGP…QLCLKIDRAE (84 aa)) form the PDZ domain. Ser18, Ser92, and Ser263 each carry phosphoserine. The tract at residues 261–282 (DGSDDRPAGTRSVRPVTKVHGG) is disordered. Positions 290–349 (PLCDKCGSGIVGAVVKARDKYRHPECFVCADCNLNLKQKGYFFVEGELYCEMHARARTRP) constitute an LIM zinc-binding domain.

As to quaternary structure, interacts with ACTN2. Forms a heterodimer with PDLIM4 (via LIM domain). Highly expressed in skeletal muscle and at low levels in the heart.

Its subcellular location is the cytoplasm. The protein localises to the myofibril. It is found in the sarcomere. The protein resides in the z line. In terms of biological role, may play a role in the organization of actin filament arrays within muscle cells. The polypeptide is PDZ and LIM domain protein 3 (Pdlim3) (Rattus norvegicus (Rat)).